An 865-amino-acid polypeptide reads, in one-letter code: Alanine--tRNA ligase (865 aa).

Residues His-554, His-558, Cys-656, and His-660 each contribute to the Zn(2+) site.

It belongs to the class-II aminoacyl-tRNA synthetase family. Zn(2+) serves as cofactor.

Its subcellular location is the cytoplasm. The enzyme catalyses tRNA(Ala) + L-alanine + ATP = L-alanyl-tRNA(Ala) + AMP + diphosphate. Catalyzes the attachment of alanine to tRNA(Ala) in a two-step reaction: alanine is first activated by ATP to form Ala-AMP and then transferred to the acceptor end of tRNA(Ala). Also edits incorrectly charged Ser-tRNA(Ala) and Gly-tRNA(Ala) via its editing domain. The polypeptide is Alanine--tRNA ligase (Francisella tularensis subsp. mediasiatica (strain FSC147)).